The chain runs to 566 residues: OTU domain-containing protein 5 (566 aa).

Disordered regions lie at residues 1 to 117 (MTIL…GDAL) and 146 to 175 (PGHS…GAGY). Over residues 11–30 (PPDADPANEPPPPGPLPPAP) the composition is skewed to pro residues. Positions 32–47 (RGGGVGVGGGGTGVGG) are enriched in gly residues. Over residues 63-75 (ASPPPQGPLPGPP) the composition is skewed to pro residues. The residue at position 64 (Ser64) is a Phosphoserine. Residues 84-97 (AVPPGAVAGPRPQQ) are compositionally biased toward low complexity. The segment covering 105–115 (GPGGPGGGPGD) has biased composition (gly residues). Ser165 bears the Phosphoserine mark. Tyr175 carries the phosphotyrosine modification. Residue Ser177 is modified to Phosphoserine. Phosphothreonine is present on Thr195. In terms of domain architecture, OTU spans 213–336 (FIIKQMKEDG…NIHYNSVVNP (124 aa)). Positions 218-224 (MKEDGAC) are cys-loop. The active site involves Asp221. Cys224 serves as the catalytic Nucleophile. The tract at residues 273–283 (KRKNNCHGNHI) is variable-loop. Ser323 bears the Phosphoserine mark. The his-loop stretch occupies residues 324–329 (YHRNIH). The active site involves His329. Phosphoserine is present on residues Ser332 and Ser370. Positions 413–497 (ARQVRGPSQP…PGTSSQFSAG (85 aa)) are disordered. Low complexity-rich tracts occupy residues 425 to 438 (ASAT…AASS) and 445 to 457 (SRSP…ASSP). At Ser447 the chain carries Phosphoserine. A Phosphothreonine modification is found at Thr502. Ser503 is modified (phosphoserine).

This sequence belongs to the peptidase C85 family. Interacts with TRAF3. Phosphorylation at Ser-177 is required for deubiquitinating activity. Phosphorylation at Ser-323, Ser-332 and Ser-503 by MTOR promotes its activity.

The protein resides in the nucleus. The catalysed reaction is Thiol-dependent hydrolysis of ester, thioester, amide, peptide and isopeptide bonds formed by the C-terminal Gly of ubiquitin (a 76-residue protein attached to proteins as an intracellular targeting signal).. With respect to regulation, inhibited by N-ethyl-maleimide (NEM). Deubiquitinating enzyme that functions as a negative regulator of the innate immune system. Has peptidase activity towards 'Lys-48'- and 'Lys-63'-linked polyubiquitin chains. Can also cleave 'Lys-11'-linked ubiquitin chains (in vitro). Acts via TRAF3 deubiquitination and subsequent suppression of type I interferon (IFN) production. Controls neuroectodermal differentiation through cleaving 'Lys-48'-linked ubiquitin chains to counteract degradation of select chromatin regulators such as ARID1A, HDAC2 and HCF1. Acts as a positive regulator of mTORC1 and mTORC2 signaling following phosphorylation by MTOR: acts by mediating deubiquitination of BTRC, leading to its stability. The chain is OTU domain-containing protein 5 from Rattus norvegicus (Rat).